The primary structure comprises 546 residues: Glucose-6-phosphate isomerase (546 aa).

The active-site Proton donor is glutamate 357. Active-site residues include histidine 389 and lysine 509.

The protein belongs to the GPI family.

It is found in the cytoplasm. It carries out the reaction alpha-D-glucose 6-phosphate = beta-D-fructose 6-phosphate. Its pathway is carbohydrate biosynthesis; gluconeogenesis. It functions in the pathway carbohydrate degradation; glycolysis; D-glyceraldehyde 3-phosphate and glycerone phosphate from D-glucose: step 2/4. Catalyzes the reversible isomerization of glucose-6-phosphate to fructose-6-phosphate. In Anaeromyxobacter dehalogenans (strain 2CP-1 / ATCC BAA-258), this protein is Glucose-6-phosphate isomerase.